A 364-amino-acid chain; its full sequence is Palmitoyltransferase ZDHHC9 (364 aa).

Residues 1–35 (MSVMVVRKKVTRKWEKLPGRNTFCCDGRVMMARQK) lie on the Cytoplasmic side of the membrane. The helical transmembrane segment at 36–56 (GIFYLTLFLILGTCTLFFAFE) threads the bilayer. Over 57–63 (CRYLAVQ) the chain is Lumenal. A helical transmembrane segment spans residues 64–84 (LSPAIPVFAAMLFLFSMATLL). Residues 85–183 (RTSFSDPGVI…NCVGKRNYRY (99 aa)) are Cytoplasmic-facing. The region spanning 139–189 (KYCYTCKIFRPPRASHCSICDNCVERFDHHCPWVGNCVGKRNYRYFYLFIL) is the DHHC domain. Cysteine 169 acts as the S-palmitoyl cysteine intermediate in catalysis. The helical transmembrane segment at 184–204 (FYLFILSLSLLTIYVFAFNIV) threads the bilayer. The Lumenal portion of the chain corresponds to 205–228 (YVALKSLKIGFLETLKETPGTVLE). The chain crosses the membrane as a helical span at residues 229–249 (VLICFFTLWSVVGLTGFHTFL). The Cytoplasmic segment spans residues 250–364 (VALNQTTNED…PPQEASEAEK (115 aa)). Residues 303 to 364 (PLEESGSRPP…PPQEASEAEK (62 aa)) are disordered. The span at 310 to 336 (RPPSTQETSSSLLPQSPASTEHMNSNE) shows a compositional bias: polar residues. Residues 346 to 356 (EMPPPEPPEPP) show a composition bias toward pro residues.

It belongs to the DHHC palmitoyltransferase family. ERF2/ZDHHC9 subfamily. In terms of assembly, interacts with GOLGA7.

It localises to the endoplasmic reticulum membrane. It is found in the golgi apparatus membrane. The enzyme catalyses L-cysteinyl-[protein] + hexadecanoyl-CoA = S-hexadecanoyl-L-cysteinyl-[protein] + CoA. In terms of biological role, palmitoyltransferase that catalyzes the addition of palmitate onto various protein substrates, such as ADRB2, GSDMD, HRAS, NRAS and CGAS. The ZDHHC9-GOLGA7 complex is a palmitoyltransferase specific for HRAS and NRAS. May have a palmitoyltransferase activity toward the beta-2 adrenergic receptor/ADRB2 and therefore regulate G protein-coupled receptor signaling. Acts as a regulator of innate immunity by catalyzing palmitoylation of CGAS, thereby promoting CGAS homodimerization and cyclic GMP-AMP synthase activity. Activates pyroptosis by catalyzing palmitoylation of gasdermin-D (GSDMD), thereby promoting membrane translocation and pore formation of GSDMD. The protein is Palmitoyltransferase ZDHHC9 (Zdhhc9) of Mus musculus (Mouse).